The following is a 1212-amino-acid chain: Nucleolar protein 6 (1212 aa).

2 disordered regions span residues 1-72 (MGKI…PVSI) and 1156-1212 (KREQ…KSLS). Over residues 1197–1212 (LKRKSLIKSRPLKSLS) the composition is skewed to basic residues.

It belongs to the NRAP family. As to quaternary structure, part of the small subunit (SSU) processome, composed of more than 70 proteins and the RNA chaperone small nucleolar RNA (snoRNA) U3.

The protein resides in the nucleus. The protein localises to the nucleolus. It localises to the chromosome. Part of the small subunit (SSU) processome, first precursor of the small eukaryotic ribosomal subunit. During the assembly of the SSU processome in the nucleolus, many ribosome biogenesis factors, an RNA chaperone and ribosomal proteins associate with the nascent pre-rRNA and work in concert to generate RNA folding, modifications, rearrangements and cleavage as well as targeted degradation of pre-ribosomal RNA by the RNA exosome. The protein is Nucleolar protein 6 of Drosophila persimilis (Fruit fly).